Reading from the N-terminus, the 122-residue chain is MKLFIILGALNAMMAVGTGAFGAHGLQGKISDHYLSVWEKATTYQMYHGLALLIIGVISGTTSINVNWAGWLIFAGIIFFSGSLYILVLTQIKVLGTITPIGGVLFIIGWIMLIIATFKFAG.

4 helical membrane passes run 3 to 23 (LFII…AFGA), 46 to 66 (MYHG…SINV), 69 to 89 (AGWL…ILVL), and 98 to 118 (ITPI…IATF).

This sequence belongs to the UPF0382 family.

The protein localises to the cell membrane. This chain is UPF0382 membrane protein SAB0533, found in Staphylococcus aureus (strain bovine RF122 / ET3-1).